The following is a 314-amino-acid chain: MSTFRQAVQEYIEMRRGLGFKLRETERGLIDFAAFLEANDTPHITTELALAWAQRPSRAQPSHWATRLGYVRVFARYRAAADPRTQIPPSGLLPFRPKRARPYLYSKEDIQRLLSAALEMPCRYTRCKLRPWTYYCLFGLLSVSGLRLGEARNLKLADVDFDAAVLTIRGTKFGKSRLVPMHASTCAVLRDYLKRRRQHCAAQAASPYLFTSQLGNRLDVGDIHRTFYALSRQIGLRGATDSHGPRLHDMRHVFATNTLVRWYEAEQDPERLLPILSTYLGHVHVADTQWYLTGSPELMKEAMRRLERRWEDRT.

A Core-binding (CB) domain is found at 2–79; the sequence is STFRQAVQEY…YVRVFARYRA (78 aa). Residues 100 to 304 form the Tyr recombinase domain; the sequence is ARPYLYSKED…SPELMKEAMR (205 aa). Residues Arg-147, Lys-172, His-248, Arg-251, and His-282 contribute to the active site. Residue Tyr-291 is the O-(3'-phospho-DNA)-tyrosine intermediate of the active site.

This sequence belongs to the 'phage' integrase family.

This is Putative integrase/recombinase y4rB from Sinorhizobium fredii (strain NBRC 101917 / NGR234).